Reading from the N-terminus, the 302-residue chain is Lipoyl synthase (302 aa).

The [4Fe-4S] cluster site is built by cysteine 44, cysteine 49, cysteine 55, cysteine 70, cysteine 74, cysteine 77, and serine 283. One can recognise a Radical SAM core domain in the interval tryptophan 56 to leucine 272.

It belongs to the radical SAM superfamily. Lipoyl synthase family. It depends on [4Fe-4S] cluster as a cofactor.

It localises to the cytoplasm. The enzyme catalyses [[Fe-S] cluster scaffold protein carrying a second [4Fe-4S](2+) cluster] + N(6)-octanoyl-L-lysyl-[protein] + 2 oxidized [2Fe-2S]-[ferredoxin] + 2 S-adenosyl-L-methionine + 4 H(+) = [[Fe-S] cluster scaffold protein] + N(6)-[(R)-dihydrolipoyl]-L-lysyl-[protein] + 4 Fe(3+) + 2 hydrogen sulfide + 2 5'-deoxyadenosine + 2 L-methionine + 2 reduced [2Fe-2S]-[ferredoxin]. It functions in the pathway protein modification; protein lipoylation via endogenous pathway; protein N(6)-(lipoyl)lysine from octanoyl-[acyl-carrier-protein]: step 2/2. Its function is as follows. Catalyzes the radical-mediated insertion of two sulfur atoms into the C-6 and C-8 positions of the octanoyl moiety bound to the lipoyl domains of lipoate-dependent enzymes, thereby converting the octanoylated domains into lipoylated derivatives. In Orientia tsutsugamushi (strain Ikeda) (Rickettsia tsutsugamushi), this protein is Lipoyl synthase.